A 567-amino-acid polypeptide reads, in one-letter code: Adenine deaminase (567 aa).

Belongs to the metallo-dependent hydrolases superfamily. Adenine deaminase family. It depends on Mn(2+) as a cofactor.

It carries out the reaction adenine + H2O + H(+) = hypoxanthine + NH4(+). The sequence is that of Adenine deaminase from Methanothrix thermoacetophila (strain DSM 6194 / JCM 14653 / NBRC 101360 / PT) (Methanosaeta thermophila).